A 459-amino-acid polypeptide reads, in one-letter code: MNRLPSSASALACSAHALNLIEKRTLDHEEMKALNREVIEYFKEHVNPGFLEYRKSVTAGGDYGAVEWQAGSLNTLVDTQGQEFIDCLGGFGIFNVGHRNPVVVSAVQNQLAKQPLHSQELLDPLRAMLAKTLAALTPGKLKYSFFCNSGTESVEAALKLAKAYQSPRGKFTFIATSGAFHGKSLGALSATAKSTFRKPFMPLLPGFRHVPFGNIEAMRTALNECKKTGDDVAAVILEPIQGEGGVILPPPGYLTAVRKLCDEFGALMILDEVQTGMGRTGKMFACEHENVQPDILCLAKALGGGVMPIGATIATEEVFSVLFDNPFLHTTTFGGNPLACAAALATINVLLEQNLLAQAEQKGDMLLDGFRQLAREYPDLVQEARGKGMLMAIEFVDNEIGYNFASEMFRQRVLVAGTLNNAKTIRIEPPLTLTIEQCELVIKAARKALAAMRVSVEEA.

Pyridoxal 5'-phosphate contacts are provided by residues 150 to 151 (GT) and Q274. An N6-(pyridoxal phosphate)lysine modification is found at K300. T332 contributes to the pyridoxal 5'-phosphate binding site.

Belongs to the class-III pyridoxal-phosphate-dependent aminotransferase family. Putrescine aminotransferase subfamily. Pyridoxal 5'-phosphate serves as cofactor.

The enzyme catalyses an alkane-alpha,omega-diamine + 2-oxoglutarate = an omega-aminoaldehyde + L-glutamate. The catalysed reaction is putrescine + 2-oxoglutarate = 1-pyrroline + L-glutamate + H2O. It catalyses the reaction cadaverine + 2-oxoglutarate = 5-aminopentanal + L-glutamate. Its pathway is amine and polyamine degradation; putrescine degradation; 4-aminobutanal from putrescine (transaminase route): step 1/1. Catalyzes the aminotransferase reaction from putrescine to 2-oxoglutarate, leading to glutamate and 4-aminobutanal, which spontaneously cyclizes to form 1-pyrroline. This is the first step in one of two pathways for putrescine degradation, where putrescine is converted into 4-aminobutanoate (gamma-aminobutyrate or GABA) via 4-aminobutanal. Also functions as a cadaverine transaminase in a a L-lysine degradation pathway to succinate that proceeds via cadaverine, glutarate and L-2-hydroxyglutarate. This is Putrescine aminotransferase from Shigella boydii serotype 4 (strain Sb227).